Here is a 299-residue protein sequence, read N- to C-terminus: Virginiamycin B lyase (299 aa).

H229 lines the substrate pocket. E269 contacts Mg(2+). The active-site Proton acceptor is H271. E286 contacts Mg(2+).

This sequence belongs to the Vgb family. In terms of assembly, monomer. The cofactor is Mg(2+).

Functionally, inactivates the type B streptogramin antibiotics by linearizing the lactone ring at the ester linkage, generating a free phenylglycine carboxylate and converting the threonyl moiety into 2-amino-butenoic acid. The polypeptide is Virginiamycin B lyase (Bordetella bronchiseptica (strain ATCC BAA-588 / NCTC 13252 / RB50) (Alcaligenes bronchisepticus)).